A 393-amino-acid polypeptide reads, in one-letter code: Chalcone synthase (393 aa).

Residue Cys-164 is part of the active site.

It belongs to the thiolase-like superfamily. Chalcone/stilbene synthases family.

It carries out the reaction (E)-4-coumaroyl-CoA + 3 malonyl-CoA + 3 H(+) = 2',4,4',6'-tetrahydroxychalcone + 3 CO2 + 4 CoA. It functions in the pathway secondary metabolite biosynthesis; flavonoid biosynthesis. In terms of biological role, the primary product of this enzyme is 4,2',4',6'-tetrahydroxychalcone (also termed naringenin-chalcone or chalcone) which can under specific conditions spontaneously isomerize into naringenin. In Vitis vinifera (Grape), this protein is Chalcone synthase (CHS).